The following is a 296-amino-acid chain: Protoheme IX farnesyltransferase (296 aa).

9 helical membrane-spanning segments follow: residues 11–31 (PGIIFGNLISVIGGFLLAAQG), 35–55 (YPLFLATLVGVSLVVASGCVF), 84–104 (VTLVYASLLGIAGFALLYIAA), 107–127 (LAMWLAVMGFVVYVGVYSLYM), 132–152 (VYGTLIGSLSGAAPPVIGYCA), 162–182 (LILLLIFSLWQMPHSYAIAIF), 208–228 (ITLYIVAFAVATLMLSLGGYA), 229–249 (GYKYLIVAAAVSVWWLGMALS), and 264–284 (LFVFSIVAITSLSVMMSVDSM).

Belongs to the UbiA prenyltransferase family. Protoheme IX farnesyltransferase subfamily.

It is found in the cell inner membrane. The catalysed reaction is heme b + (2E,6E)-farnesyl diphosphate + H2O = Fe(II)-heme o + diphosphate. Its pathway is porphyrin-containing compound metabolism; heme O biosynthesis; heme O from protoheme: step 1/1. Converts heme B (protoheme IX) to heme O by substitution of the vinyl group on carbon 2 of heme B porphyrin ring with a hydroxyethyl farnesyl side group. The polypeptide is Protoheme IX farnesyltransferase (Pectobacterium carotovorum subsp. carotovorum (strain PC1)).